A 299-amino-acid polypeptide reads, in one-letter code: MYKFRSKDMSHVFTPIKLNLALHVVGQRADGYHLIESLVYFSLSGDYLHYEPCESDQFVLTGPFAKELISHPDNLVVRARDFMHKTFPEGAHPTFFRLVKTLPVASGIGGGSGDAAGVISILRQQWNLDCPFEKLAKMSLVLGADVPMCLFALEYHQPLLVKGIGQEIIQLKEACSLAIVLVNHGQEISTQAVFKALDKRHHPSLKIDPIALKSVDSLVEALQETRNDLFSPALKMAPQLTQVLSILDECGSLFSRMSGTGATCFGIFKNQQTAQQAALLIKSMHPNWFVKSIMTLGTI.

Lys17 is a catalytic residue. 103–113 (PVASGIGGGSG) contributes to the ATP binding site. The active site involves Asp145.

Belongs to the GHMP kinase family. IspE subfamily.

The enzyme catalyses 4-CDP-2-C-methyl-D-erythritol + ATP = 4-CDP-2-C-methyl-D-erythritol 2-phosphate + ADP + H(+). Its pathway is isoprenoid biosynthesis; isopentenyl diphosphate biosynthesis via DXP pathway; isopentenyl diphosphate from 1-deoxy-D-xylulose 5-phosphate: step 3/6. Functionally, catalyzes the phosphorylation of the position 2 hydroxy group of 4-diphosphocytidyl-2C-methyl-D-erythritol. The sequence is that of 4-diphosphocytidyl-2-C-methyl-D-erythritol kinase from Bartonella tribocorum (strain CIP 105476 / IBS 506).